A 193-amino-acid polypeptide reads, in one-letter code: MTEYLLLFIGTVLVNNFVLVKFLGLCPFMGVSKKLETAIGMGLATTFVITLASICAWLVNHLILLPLDLVYLRTMAYILVIAVVVQFTEMVVRKTSPDLYRLLGIFLPLITTNCAVLGVPLLSVNLNHTFMQAAIYGFSASIGFSLVMVLFAGVRERLVLADVPAPFKGSSIALVTAGLMALAFMGFAGLVKF.

6 helical membrane-spanning segments follow: residues 5–25 (LLLF…FLGL), 47–67 (FVIT…LLPL), 72–92 (LRTM…EMVV), 102–122 (LLGI…VPLL), 134–154 (AIYG…FAGV), and 171–191 (SIAL…AGLV).

This sequence belongs to the NqrDE/RnfAE family. In terms of assembly, the complex is composed of six subunits: RnfA, RnfB, RnfC, RnfD, RnfE and RnfG.

Its subcellular location is the cell inner membrane. Its function is as follows. Part of a membrane-bound complex that couples electron transfer with translocation of ions across the membrane. This chain is Ion-translocating oxidoreductase complex subunit A, found in Erwinia tasmaniensis (strain DSM 17950 / CFBP 7177 / CIP 109463 / NCPPB 4357 / Et1/99).